The chain runs to 261 residues: Glucose 1-dehydrogenase (261 aa).

An NADP(+)-binding site is contributed by 11–35; it reads AITGAASGLGKAMAIRFGKEQAKVV. Ser-145 is a substrate binding site. Tyr-158 acts as the Proton acceptor in catalysis.

It belongs to the short-chain dehydrogenases/reductases (SDR) family. As to quaternary structure, homotetramer.

The catalysed reaction is D-glucose + NAD(+) = D-glucono-1,5-lactone + NADH + H(+). The enzyme catalyses D-glucose + NADP(+) = D-glucono-1,5-lactone + NADPH + H(+). The chain is Glucose 1-dehydrogenase (gdh) from Bacillus subtilis (strain 168).